The sequence spans 341 residues: Paired box protein Pax-9 (341 aa).

The paired DNA-binding region spans 4–130 (AFGEVNQLGG…SSISRILRNK (127 aa)). Residues 7 to 63 (EVNQLGGVFVNGRPLPNAIRLRIVELAQLGIRPCDISRQLRVSHGCVSKILARYNET) are PAI subdomain. The segment at 82-130 (TVVKHIRTYKQRDPGIFAWEIRDRLLADGVCDKYNVPSVSSISRILRNK) is RED subdomain. Residues 168–189 (AAAAKVPTPPGVPAIPGSVAMP) form an interaction with KDM5B region.

As to quaternary structure, interacts with KDM5B.

Its subcellular location is the nucleus. Transcription factor required for normal development of thymus, parathyroid glands, ultimobranchial bodies, teeth, skeletal elements of skull and larynx as well as distal limbs. The chain is Paired box protein Pax-9 (PAX9) from Pan troglodytes (Chimpanzee).